Here is a 51-residue protein sequence, read N- to C-terminus: Large ribosomal subunit protein bL33 (51 aa).

Belongs to the bacterial ribosomal protein bL33 family.

The chain is Large ribosomal subunit protein bL33 from Francisella tularensis subsp. tularensis (strain FSC 198).